Reading from the N-terminus, the 212-residue chain is Large ribosomal subunit protein uL3 (212 aa).

Gln153 is modified (N5-methylglutamine).

Belongs to the universal ribosomal protein uL3 family. Part of the 50S ribosomal subunit. Forms a cluster with proteins L14 and L19. In terms of processing, methylated by PrmB.

Functionally, one of the primary rRNA binding proteins, it binds directly near the 3'-end of the 23S rRNA, where it nucleates assembly of the 50S subunit. The chain is Large ribosomal subunit protein uL3 from Colwellia psychrerythraea (strain 34H / ATCC BAA-681) (Vibrio psychroerythus).